A 560-amino-acid chain; its full sequence is Probable 2,3-bisphosphoglycerate-independent phosphoglycerate mutase 2 (560 aa).

N-acetylglycine is present on G2. Mn(2+) contacts are provided by D29 and S82. The active-site Phosphoserine intermediate is the S82. Substrate-binding positions include H141, R171–D172, R207, R214, R287–R290, and K362. Mn(2+)-binding residues include D431, H435, D472, H473, and H502.

It belongs to the BPG-independent phosphoglycerate mutase family. In terms of assembly, monomer. Mn(2+) serves as cofactor.

It is found in the cytoplasm. The catalysed reaction is (2R)-2-phosphoglycerate = (2R)-3-phosphoglycerate. It functions in the pathway carbohydrate degradation; glycolysis; pyruvate from D-glyceraldehyde 3-phosphate: step 3/5. Functionally, catalyzes the interconversion of 2-phosphoglycerate (2-PGA) and 3-phosphoglycerate (3-PGA). Required for guard cell function (e.g. blue light-, abscisic acid- (ABA), and low CO(2)-regulated stomatal movements) and fertility (e.g. pollen grains production). This is Probable 2,3-bisphosphoglycerate-independent phosphoglycerate mutase 2 (PGM2) from Arabidopsis thaliana (Mouse-ear cress).